The following is a 203-amino-acid chain: Thymidylate kinase (203 aa).

10-17 (GIDGSGKS) contributes to the ATP binding site.

The protein belongs to the thymidylate kinase family.

It catalyses the reaction dTMP + ATP = dTDP + ADP. Functionally, phosphorylation of dTMP to form dTDP in both de novo and salvage pathways of dTTP synthesis. The sequence is that of Thymidylate kinase from Brachyspira hyodysenteriae (strain ATCC 49526 / WA1).